The primary structure comprises 496 residues: UDP-N-acetylmuramoyl-L-alanyl-D-glutamate--2,6-diaminopimelate ligase (496 aa).

2 residues coordinate UDP-N-acetyl-alpha-D-muramoyl-L-alanyl-D-glutamate: Leu29 and Ser31. Residue 118-124 (GTNGKTT) coordinates ATP. Residues Asn159, 160-161 (TT), Ser187, Gln193, and Arg195 each bind UDP-N-acetyl-alpha-D-muramoyl-L-alanyl-D-glutamate. Lys227 bears the N6-carboxylysine mark. Meso-2,6-diaminopimelate-binding positions include Arg392, 416–419 (DNPR), Gly467, and Glu471. Residues 416–419 (DNPR) carry the Meso-diaminopimelate recognition motif motif.

This sequence belongs to the MurCDEF family. MurE subfamily. Requires Mg(2+) as cofactor. Post-translationally, carboxylation is probably crucial for Mg(2+) binding and, consequently, for the gamma-phosphate positioning of ATP.

It is found in the cytoplasm. The enzyme catalyses UDP-N-acetyl-alpha-D-muramoyl-L-alanyl-D-glutamate + meso-2,6-diaminopimelate + ATP = UDP-N-acetyl-alpha-D-muramoyl-L-alanyl-gamma-D-glutamyl-meso-2,6-diaminopimelate + ADP + phosphate + H(+). It functions in the pathway cell wall biogenesis; peptidoglycan biosynthesis. Its function is as follows. Catalyzes the addition of meso-diaminopimelic acid to the nucleotide precursor UDP-N-acetylmuramoyl-L-alanyl-D-glutamate (UMAG) in the biosynthesis of bacterial cell-wall peptidoglycan. This is UDP-N-acetylmuramoyl-L-alanyl-D-glutamate--2,6-diaminopimelate ligase from Wigglesworthia glossinidia brevipalpis.